We begin with the raw amino-acid sequence, 424 residues long: CinA-like protein (424 aa).

Belongs to the CinA family.

The protein is CinA-like protein of Shewanella loihica (strain ATCC BAA-1088 / PV-4).